The following is a 64-amino-acid chain: Large ribosomal subunit protein bL32 (64 aa).

The interval 1–35 is disordered; sequence MAVQKSRVTPSRRGQRRSHDALTAKQLSTDPTSGE.

Belongs to the bacterial ribosomal protein bL32 family.

The chain is Large ribosomal subunit protein bL32 from Xanthomonas campestris pv. campestris (strain 8004).